The sequence spans 54 residues: Sec-independent protein translocase protein TatA (54 aa).

The chain crosses the membrane as a helical span at residues 1 to 21 (MGMSFSHLLIVLLIIFVLFGA).

The protein belongs to the TatA/E family. The Tat system comprises two distinct complexes: a TatABC complex, containing multiple copies of TatA, TatB and TatC subunits, and a separate TatA complex, containing only TatA subunits. Substrates initially bind to the TatABC complex, which probably triggers association of the separate TatA complex to form the active translocon.

The protein resides in the cell inner membrane. Its function is as follows. Part of the twin-arginine translocation (Tat) system that transports large folded proteins containing a characteristic twin-arginine motif in their signal peptide across membranes. TatA could form the protein-conducting channel of the Tat system. This is Sec-independent protein translocase protein TatA from Rickettsia canadensis (strain McKiel).